The sequence spans 419 residues: Histidine--tRNA ligase (419 aa).

It belongs to the class-II aminoacyl-tRNA synthetase family. Homodimer.

The protein localises to the cytoplasm. The catalysed reaction is tRNA(His) + L-histidine + ATP = L-histidyl-tRNA(His) + AMP + diphosphate + H(+). The chain is Histidine--tRNA ligase from Syntrophotalea carbinolica (strain DSM 2380 / NBRC 103641 / GraBd1) (Pelobacter carbinolicus).